A 212-amino-acid polypeptide reads, in one-letter code: COP9 signalosome complex subunit 8 (212 aa).

The PCI domain maps to 26–193; it reads TSLSAYEEQA…KPVVTAPPKD (168 aa).

The protein belongs to the CSN8 family. In terms of assembly, component of the COP9 signalosome (CSN) complex.

Its subcellular location is the cytoplasm. It localises to the nucleus. In terms of biological role, component of the COP9 signalosome (CSN) complex that acts as an regulator of the ubiquitin (Ubl) conjugation pathway by mediating the deneddylation of the cullin subunit of SCF-type E3 ubiquitin-protein ligase complexes. The CSN complex seems to link protein degradation to sexual development. The chain is COP9 signalosome complex subunit 8 (csnH) from Emericella nidulans (strain FGSC A4 / ATCC 38163 / CBS 112.46 / NRRL 194 / M139) (Aspergillus nidulans).